The following is a 119-amino-acid chain: ATP-dependent Clp protease adapter protein ClpS (119 aa).

The protein belongs to the ClpS family. As to quaternary structure, binds to the N-terminal domain of the chaperone ClpA.

Involved in the modulation of the specificity of the ClpAP-mediated ATP-dependent protein degradation. The protein is ATP-dependent Clp protease adapter protein ClpS of Marinobacter nauticus (strain ATCC 700491 / DSM 11845 / VT8) (Marinobacter aquaeolei).